Here is a 334-residue protein sequence, read N- to C-terminus: Phosphate acyltransferase (334 aa).

The protein belongs to the PlsX family. As to quaternary structure, homodimer. Probably interacts with PlsY.

Its subcellular location is the cytoplasm. It catalyses the reaction a fatty acyl-[ACP] + phosphate = an acyl phosphate + holo-[ACP]. Its pathway is lipid metabolism; phospholipid metabolism. Its function is as follows. Catalyzes the reversible formation of acyl-phosphate (acyl-PO(4)) from acyl-[acyl-carrier-protein] (acyl-ACP). This enzyme utilizes acyl-ACP as fatty acyl donor, but not acyl-CoA. In Halothermothrix orenii (strain H 168 / OCM 544 / DSM 9562), this protein is Phosphate acyltransferase.